Here is a 249-residue protein sequence, read N- to C-terminus: Triosephosphate isomerase (249 aa).

Substrate is bound at residue 9–11 (NWK). Histidine 94 (electrophile) is an active-site residue. The Proton acceptor role is filled by glutamate 166. Substrate is bound by residues glycine 172, serine 211, and 232–233 (GG).

It belongs to the triosephosphate isomerase family. In terms of assembly, homodimer.

It is found in the cytoplasm. It carries out the reaction D-glyceraldehyde 3-phosphate = dihydroxyacetone phosphate. The protein operates within carbohydrate biosynthesis; gluconeogenesis. It participates in carbohydrate degradation; glycolysis; D-glyceraldehyde 3-phosphate from glycerone phosphate: step 1/1. Its function is as follows. Involved in the gluconeogenesis. Catalyzes stereospecifically the conversion of dihydroxyacetone phosphate (DHAP) to D-glyceraldehyde-3-phosphate (G3P). This Dechloromonas aromatica (strain RCB) protein is Triosephosphate isomerase.